The chain runs to 97 residues: Putative membrane protein insertion efficiency factor (97 aa).

Belongs to the UPF0161 family.

It localises to the cell membrane. Functionally, could be involved in insertion of integral membrane proteins into the membrane. This chain is Putative membrane protein insertion efficiency factor, found in Lactobacillus helveticus (strain DPC 4571).